Consider the following 879-residue polypeptide: Alanine--tRNA ligase (879 aa).

The Zn(2+) site is built by H564, H568, C666, and H670.

This sequence belongs to the class-II aminoacyl-tRNA synthetase family. Zn(2+) serves as cofactor.

The protein localises to the cytoplasm. The catalysed reaction is tRNA(Ala) + L-alanine + ATP = L-alanyl-tRNA(Ala) + AMP + diphosphate. Catalyzes the attachment of alanine to tRNA(Ala) in a two-step reaction: alanine is first activated by ATP to form Ala-AMP and then transferred to the acceptor end of tRNA(Ala). Also edits incorrectly charged Ser-tRNA(Ala) and Gly-tRNA(Ala) via its editing domain. The protein is Alanine--tRNA ligase of Crocosphaera subtropica (strain ATCC 51142 / BH68) (Cyanothece sp. (strain ATCC 51142)).